We begin with the raw amino-acid sequence, 522 residues long: Maturase K (522 aa).

The protein belongs to the intron maturase 2 family. MatK subfamily.

The protein resides in the plastid. It is found in the chloroplast. Usually encoded in the trnK tRNA gene intron. Probably assists in splicing its own and other chloroplast group II introns. The chain is Maturase K from Sapindus saponaria (Soapberry).